Reading from the N-terminus, the 388-residue chain is 4-hydroxy-3-methylbut-2-en-1-yl diphosphate synthase (flavodoxin) (388 aa).

Residues 1–22 (MTSVNLGMPAAPQPVLSPRRKT) are disordered. Residues Cys281, Cys284, Cys316, and Glu323 each contribute to the [4Fe-4S] cluster site.

It belongs to the IspG family. [4Fe-4S] cluster is required as a cofactor.

The enzyme catalyses (2E)-4-hydroxy-3-methylbut-2-enyl diphosphate + oxidized [flavodoxin] + H2O + 2 H(+) = 2-C-methyl-D-erythritol 2,4-cyclic diphosphate + reduced [flavodoxin]. It participates in isoprenoid biosynthesis; isopentenyl diphosphate biosynthesis via DXP pathway; isopentenyl diphosphate from 1-deoxy-D-xylulose 5-phosphate: step 5/6. Converts 2C-methyl-D-erythritol 2,4-cyclodiphosphate (ME-2,4cPP) into 1-hydroxy-2-methyl-2-(E)-butenyl 4-diphosphate. The chain is 4-hydroxy-3-methylbut-2-en-1-yl diphosphate synthase (flavodoxin) from Kocuria rhizophila (strain ATCC 9341 / DSM 348 / NBRC 103217 / DC2201).